Here is a 353-residue protein sequence, read N- to C-terminus: Ribosome biogenesis protein BRX1 homolog (353 aa).

Residues 1 to 10 show a composition bias toward basic residues; that stretch reads MAATKRKRRG. The interval 1-46 is disordered; sequence MAATKRKRRGGLAVQAKKLKRDAKDGKLPAKANDVSEEAAEEEKDR. A Brix domain is found at 60 to 249; it reads ERILIFSSRG…LIKIFQGSFG (190 aa). Lysine 160 participates in a covalent cross-link: Glycyl lysine isopeptide (Lys-Gly) (interchain with G-Cter in SUMO2). Serine 261 carries the phosphoserine modification. Lysine 276 carries the N6-acetyllysine modification. Glycyl lysine isopeptide (Lys-Gly) (interchain with G-Cter in SUMO2) cross-links involve residues lysine 314 and lysine 322.

This sequence belongs to the BRX1 family.

The protein localises to the nucleus. Its subcellular location is the nucleolus. Functionally, required for biogenesis of the 60S ribosomal subunit. The chain is Ribosome biogenesis protein BRX1 homolog (BRIX1) from Bos taurus (Bovine).